The primary structure comprises 312 residues: Beta-ketoacyl-[acyl-carrier-protein] synthase III (312 aa).

Residues Cys112 and His237 contribute to the active site. Positions 238 to 242 are ACP-binding; sequence QANIR. Asn267 is a catalytic residue.

Belongs to the thiolase-like superfamily. FabH family. As to quaternary structure, homodimer.

The protein resides in the cytoplasm. The enzyme catalyses malonyl-[ACP] + acetyl-CoA + H(+) = 3-oxobutanoyl-[ACP] + CO2 + CoA. Its pathway is lipid metabolism; fatty acid biosynthesis. Functionally, catalyzes the condensation reaction of fatty acid synthesis by the addition to an acyl acceptor of two carbons from malonyl-ACP. Catalyzes the first condensation reaction which initiates fatty acid synthesis and may therefore play a role in governing the total rate of fatty acid production. Possesses both acetoacetyl-ACP synthase and acetyl transacylase activities. Its substrate specificity determines the biosynthesis of branched-chain and/or straight-chain of fatty acids. This is Beta-ketoacyl-[acyl-carrier-protein] synthase III from Oceanobacillus iheyensis (strain DSM 14371 / CIP 107618 / JCM 11309 / KCTC 3954 / HTE831).